The following is a 186-amino-acid chain: Ribosome-recycling factor (186 aa).

This sequence belongs to the RRF family.

The protein localises to the cytoplasm. Its function is as follows. Responsible for the release of ribosomes from messenger RNA at the termination of protein biosynthesis. May increase the efficiency of translation by recycling ribosomes from one round of translation to another. The sequence is that of Ribosome-recycling factor from Cupriavidus metallidurans (strain ATCC 43123 / DSM 2839 / NBRC 102507 / CH34) (Ralstonia metallidurans).